Reading from the N-terminus, the 313-residue chain is Ribosomal RNA small subunit methyltransferase H (313 aa).

S-adenosyl-L-methionine is bound by residues 35–37, Asp55, Phe79, Asp100, and Gln107; that span reads GGH.

Belongs to the methyltransferase superfamily. RsmH family.

It is found in the cytoplasm. It carries out the reaction cytidine(1402) in 16S rRNA + S-adenosyl-L-methionine = N(4)-methylcytidine(1402) in 16S rRNA + S-adenosyl-L-homocysteine + H(+). Functionally, specifically methylates the N4 position of cytidine in position 1402 (C1402) of 16S rRNA. This chain is Ribosomal RNA small subunit methyltransferase H, found in Burkholderia ambifaria (strain ATCC BAA-244 / DSM 16087 / CCUG 44356 / LMG 19182 / AMMD) (Burkholderia cepacia (strain AMMD)).